The chain runs to 213 residues: 5''-phosphoribostamycin phosphatase (213 aa).

The active-site Tele-phosphohistidine intermediate is histidine 8. Residue histidine 155 is part of the active site.

This sequence belongs to the histidine phosphatase superfamily.

The enzyme catalyses 5''-phosphoribostamycin + H2O = ribostamycin + phosphate. The protein operates within antibiotic biosynthesis; butirosin biosynthesis. Catalyzes dephosphorylation of 5''-phosphoribostamycin to generate ribostamycinin the biosynthetic pathway of butirosin. This chain is 5''-phosphoribostamycin phosphatase (btrP), found in Niallia circulans (Bacillus circulans).